A 331-amino-acid polypeptide reads, in one-letter code: Homoserine O-succinyltransferase (331 aa).

C141 functions as the Acyl-thioester intermediate in the catalytic mechanism. Residues K162 and S190 each coordinate substrate. Residue H233 is the Proton acceptor of the active site. The active site involves E235. Position 247 (R247) interacts with substrate.

Belongs to the MetA family.

It is found in the cytoplasm. The catalysed reaction is L-homoserine + succinyl-CoA = O-succinyl-L-homoserine + CoA. It functions in the pathway amino-acid biosynthesis; L-methionine biosynthesis via de novo pathway; O-succinyl-L-homoserine from L-homoserine: step 1/1. In terms of biological role, transfers a succinyl group from succinyl-CoA to L-homoserine, forming succinyl-L-homoserine. The chain is Homoserine O-succinyltransferase from Methylorubrum extorquens (strain DSM 6343 / CIP 106787 / DM4) (Methylobacterium extorquens).